Here is a 254-residue protein sequence, read N- to C-terminus: 4-hydroxy-tetrahydrodipicolinate reductase (254 aa).

Gly7–Ile12 serves as a coordination point for NAD(+). Arg35 is an NADP(+) binding site. NAD(+) is bound by residues Gly91–Thr93 and Ala115–Met118. The active-site Proton donor/acceptor is His147. His148 is a binding site for (S)-2,3,4,5-tetrahydrodipicolinate. Lys151 serves as the catalytic Proton donor. A (S)-2,3,4,5-tetrahydrodipicolinate-binding site is contributed by Gly157–Thr158.

This sequence belongs to the DapB family.

The protein localises to the cytoplasm. It carries out the reaction (S)-2,3,4,5-tetrahydrodipicolinate + NAD(+) + H2O = (2S,4S)-4-hydroxy-2,3,4,5-tetrahydrodipicolinate + NADH + H(+). The catalysed reaction is (S)-2,3,4,5-tetrahydrodipicolinate + NADP(+) + H2O = (2S,4S)-4-hydroxy-2,3,4,5-tetrahydrodipicolinate + NADPH + H(+). It functions in the pathway amino-acid biosynthesis; L-lysine biosynthesis via DAP pathway; (S)-tetrahydrodipicolinate from L-aspartate: step 4/4. Catalyzes the conversion of 4-hydroxy-tetrahydrodipicolinate (HTPA) to tetrahydrodipicolinate. The chain is 4-hydroxy-tetrahydrodipicolinate reductase from Helicobacter pylori (strain P12).